A 479-amino-acid polypeptide reads, in one-letter code: Poly(A) polymerase catalytic subunit (479 aa).

Catalysis depends on residues Asp202 and Asp204. The Ca(2+) site is built by Asp202, Asp204, and Asp253.

The protein belongs to the poxviridae poly(A) polymerase catalytic subunit family. As to quaternary structure, heterodimer of a large (catalytic) subunit and a small (regulatory) subunit.

The catalysed reaction is RNA(n) + ATP = RNA(n)-3'-adenine ribonucleotide + diphosphate. In terms of biological role, polymerase that creates the 3'-poly(A) tail of mRNA's. The polypeptide is Poly(A) polymerase catalytic subunit (OPG063) (Cowpox virus (strain GRI-90 / Grishak) (CPV)).